A 793-amino-acid polypeptide reads, in one-letter code: Protocadherin beta-7 (793 aa).

A signal peptide spans 1–26 (MEARVERAVQKRQVLFLCVFLGMSWA). Residues 27–688 (GAEPLRYFVA…DQANLLTVYL (662 aa)) are Extracellular-facing. Cadherin domains are found at residues 35–133 (VAEE…APVF), 138–242 (ISLK…APDF), 247–347 (YKVQ…RPEL), 352–451 (LTSP…APAF), and 456–561 (YTLF…SPFV). Asn-169 is a glycosylation site (N-linked (GlcNAc...) asparagine). N-linked (GlcNAc...) asparagine glycosylation is found at Asn-418 and Asn-436. An N-linked (GlcNAc...) asparagine glycan is attached at Asn-567. Residues 568 to 671 (SSAPCTEPLP…LVDGFSQPYL (104 aa)) enclose the Cadherin 6 domain. A helical membrane pass occupies residues 689–709 (VVALASVSSLFLLSVLLFVAV). Topologically, residues 710 to 793 (RLCRRSRAAP…NRPFQNNLGF (84 aa)) are cytoplasmic.

The protein resides in the cell membrane. Its function is as follows. Potential calcium-dependent cell-adhesion protein. May be involved in the establishment and maintenance of specific neuronal connections in the brain. This chain is Protocadherin beta-7 (PCDHB7), found in Pan troglodytes (Chimpanzee).